Consider the following 375-residue polypeptide: Flagellin (375 aa).

It belongs to the bacterial flagellin family.

The protein resides in the secreted. It is found in the bacterial flagellum. Its function is as follows. Flagellin is the subunit protein which polymerizes to form the filaments of bacterial flagella. Flagella are an important component in the invasiveness of B.bacilliformis. This chain is Flagellin, found in Bartonella bacilliformis.